The primary structure comprises 253 residues: Glucosamine-6-phosphate deaminase (253 aa).

Asp65 (proton acceptor; for enolization step) is an active-site residue. Asn133 serves as the catalytic For ring-opening step. His135 functions as the Proton acceptor; for ring-opening step in the catalytic mechanism. Glu140 acts as the For ring-opening step in catalysis.

Belongs to the glucosamine/galactosamine-6-phosphate isomerase family. NagB subfamily.

The catalysed reaction is alpha-D-glucosamine 6-phosphate + H2O = beta-D-fructose 6-phosphate + NH4(+). It functions in the pathway amino-sugar metabolism; N-acetylneuraminate degradation; D-fructose 6-phosphate from N-acetylneuraminate: step 5/5. In terms of biological role, catalyzes the reversible isomerization-deamination of glucosamine 6-phosphate (GlcN6P) to form fructose 6-phosphate (Fru6P) and ammonium ion. This chain is Glucosamine-6-phosphate deaminase, found in Corynebacterium glutamicum (strain R).